The chain runs to 429 residues: Glucan 1,3-beta-glucosidase (429 aa).

The signal sequence occupies residues 1 to 19 (MLSMQVVSLISLLVSVCLA). A propeptide spanning residues 20-27 (QPLPLSKR) is cleaved from the precursor. The Proton donor role is filled by Glu215. Disulfide bonds link Cys299/Cys425 and Cys324/Cys354. Catalysis depends on Glu316, which acts as the Nucleophile.

The protein belongs to the glycosyl hydrolase 5 (cellulase A) family.

It is found in the secreted. The catalysed reaction is Successive hydrolysis of beta-D-glucose units from the non-reducing ends of (1-&gt;3)-beta-D-glucans, releasing alpha-glucose.. Functionally, beta-glucanases participate in the metabolism of beta-glucan, the main structural component of the cell wall. It could also function biosynthetically as a transglycosylase. The polypeptide is Glucan 1,3-beta-glucosidase (Kluyveromyces lactis (strain ATCC 8585 / CBS 2359 / DSM 70799 / NBRC 1267 / NRRL Y-1140 / WM37) (Yeast)).